Consider the following 87-residue polypeptide: Small ribosomal subunit protein uS17 (87 aa).

The protein belongs to the universal ribosomal protein uS17 family. In terms of assembly, part of the 30S ribosomal subunit.

Its function is as follows. One of the primary rRNA binding proteins, it binds specifically to the 5'-end of 16S ribosomal RNA. This chain is Small ribosomal subunit protein uS17, found in Cytophaga hutchinsonii (strain ATCC 33406 / DSM 1761 / CIP 103989 / NBRC 15051 / NCIMB 9469 / D465).